Reading from the N-terminus, the 379-residue chain is Oxysterol-binding protein-related protein 4C (379 aa).

The protein belongs to the OSBP family. Expressed in flowers.

Its function is as follows. May be involved in the transport of sterols. In Arabidopsis thaliana (Mouse-ear cress), this protein is Oxysterol-binding protein-related protein 4C (ORP4C).